Here is a 531-residue protein sequence, read N- to C-terminus: MFSLQNLCRKTLPDCKLPEFFDEYILQLLGLYWENHGTIQRAGNNCVLIQQHTLIPVNEALRIAASEENYEIVSLLLAWEGNLYYAIIGALEGNRHDLIRKYDDQIKDHHEILPFIDDPVIFHKCHIMRRCFFDCILYQAVKYSKFRVLLYFKYRLENDLPLAHLLIKKACEDHNYEVIKWIYENLHIYNIMDTFGCAIAHKDLRLYRLGYTFIYNRIVPYKYHYLDVLILSGLHLLYKVAAKGYLDFILETLKYDHNNDNLDIILTQAATYNHRKILTYYIPQLTYAQIEQCLFMAIKKKSSKKTLNLLLSHLKLSIKLIKKISQYVATYNSTNIIGILNMRRKKKIYLDIILTKFVKKAIFNKFVVRCMDTFSINPERIIKMAARINKMLLVKKISEHAWKNHAARLKHLKHAVYTMKHKDGKNRLMNLIYDHYYYHMQGEEIFSLARFYAIHHAPKLFDVFYDCCLLDTIRFKNLLLDCSHIIGKNAHDATNITIVNKYIGNLFAMGVLSKKEILQDYPSIYSKHYMP.

This sequence belongs to the asfivirus MGF 505 family.

Its function is as follows. Plays a role in virus cell tropism, and may be required for efficient virus replication in macrophages. This chain is Protein MGF 505-1R, found in Ornithodoros (relapsing fever ticks).